The chain runs to 388 residues: Succinate--CoA ligase [ADP-forming] subunit beta (388 aa).

An ATP-grasp domain is found at Lys9–Gln244. Residues Lys46, Gly53 to Gly55, Glu99, Cys102, and Glu107 each bind ATP. Mg(2+)-binding residues include Asn199 and Asp213. Substrate is bound by residues Asn264 and Gly321–Met323.

The protein belongs to the succinate/malate CoA ligase beta subunit family. In terms of assembly, heterotetramer of two alpha and two beta subunits. Requires Mg(2+) as cofactor.

The enzyme catalyses succinate + ATP + CoA = succinyl-CoA + ADP + phosphate. It catalyses the reaction GTP + succinate + CoA = succinyl-CoA + GDP + phosphate. It functions in the pathway carbohydrate metabolism; tricarboxylic acid cycle; succinate from succinyl-CoA (ligase route): step 1/1. In terms of biological role, succinyl-CoA synthetase functions in the citric acid cycle (TCA), coupling the hydrolysis of succinyl-CoA to the synthesis of either ATP or GTP and thus represents the only step of substrate-level phosphorylation in the TCA. The beta subunit provides nucleotide specificity of the enzyme and binds the substrate succinate, while the binding sites for coenzyme A and phosphate are found in the alpha subunit. This is Succinate--CoA ligase [ADP-forming] subunit beta from Anaeromyxobacter dehalogenans (strain 2CP-C).